A 652-amino-acid chain; its full sequence is Meiotic sister-chromatid recombination protein 3 (652 aa).

4 disordered regions span residues 123–151, 304–406, 470–576, and 594–652; these read RTGT…SRTG, NNSK…SDQK, EQIQ…ESGA, and ATPV…INTK. Residues 125-141 are compositionally biased toward polar residues; that stretch reads GTASSRGVGSRTGSMTG. Residues 316–336 show a composition bias toward low complexity; it reads VQKQGVQQQQEVQHQGISQVQ. Positions 337-361 are enriched in polar residues; it reads NTEAKSVGRKSTMSKRMTLRDTPNA. The segment covering 380–390 has biased composition (basic residues); the sequence is TKRKSIFKSKK. 2 stretches are compositionally biased toward polar residues: residues 506–517 and 524–544; these read QFSQENSGNQPP and QYSQ…NFDT. A compositionally biased stretch (low complexity) spans 545–569; that stretch reads NASGHNINHNNNNHNNNNNTSSSSS. Positions 612 to 621 are enriched in polar residues; it reads SSPSIDNTPR. Residues 640-652 show a composition bias toward basic residues; it reads RLFKSNKTHINTK.

The protein localises to the cell membrane. In terms of biological role, may be involved in the control of meiotic sister-chromatid recombination. The polypeptide is Meiotic sister-chromatid recombination protein 3 (MSC3) (Kluyveromyces lactis (strain ATCC 8585 / CBS 2359 / DSM 70799 / NBRC 1267 / NRRL Y-1140 / WM37) (Yeast)).